Here is a 540-residue protein sequence, read N- to C-terminus: Signal peptide peptidase-like 3 (540 aa).

An N-terminal signal peptide occupies residues 1-28; that stretch reads MSSFDPPNHRYSALVLILLLLGFSVAAA. The Lumenal segment spans residues 29–194; sequence DDVSWTEDSS…LYAPKRPAVD (166 aa). The PA domain maps to 98-172; the sequence is SHLSSRLDGH…ISKSSGDALN (75 aa). 2 N-linked (GlcNAc...) asparagine glycosylation sites follow: N155 and N172. Residues 195–215 traverse the membrane as a helical segment; the sequence is LTAGLLLLMAVGTVVVASLWS. Topologically, residues 216 to 250 are cytoplasmic; that stretch reads ELTDPDQANESYSILAKDVSSAGTRKDDPEKEILD. A helical transmembrane segment spans residues 251 to 273; it reads ISVTGAVFFIVTASIFLLLLFYF. Topologically, residues 274–276 are lumenal; it reads MSS. The chain crosses the membrane as a helical span at residues 277–299; that stretch reads WFVWVLTIFFCIGGMQGMHNIIM. Over 300–321 the chain is Cytoplasmic; the sequence is AVILRKCRHLARKSVKLPLLGT. The helical transmembrane segment at 322 to 342 threads the bilayer; it reads MSVLSLLVNIVCLAFAVFWFI. The Lumenal portion of the chain corresponds to 343–347; the sequence is KRHTS. A helical membrane pass occupies residues 348–368; sequence YSWVGQDILGICLMITALQVV. At 369-377 the chain is on the cytoplasmic side; it reads RLPNIKVAT. Residues 378–398 form a helical membrane-spanning segment; it reads VLLCCAFVYDIFWVFISPLIF. D387 is a catalytic residue. Residues 399–429 lie on the Lumenal side of the membrane; it reads HESVMIVVAQGDSSTGESIPMLLRIPRFFDP. The chain crosses the membrane as a helical span at residues 430–450; that stretch reads WGGYDMIGFGDILFPGLLISF. D440 is a catalytic residue. The Cytoplasmic portion of the chain corresponds to 451-466; it reads ASRYDKIKKRVISNGY. The chain crosses the membrane as a helical span at residues 467-487; that stretch reads FLWLTIGYGIGLLLTYLGLYL. The Lumenal segment spans residues 488-492; the sequence is MDGHG. Residues 493–513 traverse the membrane as a helical segment; it reads QPALLYIVPCTLGLAVILGLV. Residues 494 to 496 carry the PAL motif; that stretch reads PAL. The Cytoplasmic portion of the chain corresponds to 514-540; sequence RGELKELWNYGIEESESHTPEDPMPVA.

It belongs to the peptidase A22B family. Glycosylated. Ubiquitous.

It is found in the endosome membrane. Functionally, intramembrane-cleaving aspartic protease (I-CLiP) that cleaves type II membrane signal peptides in the hydrophobic plane of the membrane. The protein is Signal peptide peptidase-like 3 (SPPL3) of Arabidopsis thaliana (Mouse-ear cress).